A 554-amino-acid chain; its full sequence is Carboxypeptidase Y homolog A (554 aa).

The signal sequence occupies residues 1 to 17; it reads MRISASTVLLGAASAAS. Residues 18-137 constitute a propeptide that is removed on maturation; the sequence is AASFQNQAQH…QLDNFNLRVK (120 aa). Intrachain disulfides connect cysteine 191–cysteine 431, cysteine 325–cysteine 339, cysteine 349–cysteine 372, cysteine 356–cysteine 365, and cysteine 394–cysteine 401. N-linked (GlcNAc...) asparagine glycosylation occurs at asparagine 222. Serine 278 is an active-site residue. Residue aspartate 470 is part of the active site. Residue asparagine 518 is glycosylated (N-linked (GlcNAc...) asparagine). Residue histidine 529 is part of the active site.

The protein belongs to the peptidase S10 family.

It is found in the vacuole. It carries out the reaction Release of a C-terminal amino acid with broad specificity.. Its function is as follows. Vacuolar carboxypeptidase involved in degradation of small peptides. Digests preferentially peptides containing an aliphatic or hydrophobic residue in P1' position, as well as methionine, leucine or phenylalanine in P1 position of ester substrate. In Neurospora crassa (strain ATCC 24698 / 74-OR23-1A / CBS 708.71 / DSM 1257 / FGSC 987), this protein is Carboxypeptidase Y homolog A (cpyA).